A 379-amino-acid polypeptide reads, in one-letter code: Cobalt-precorrin-5B C(1)-methyltransferase (379 aa).

It belongs to the CbiD family.

The enzyme catalyses Co-precorrin-5B + S-adenosyl-L-methionine = Co-precorrin-6A + S-adenosyl-L-homocysteine. Its pathway is cofactor biosynthesis; adenosylcobalamin biosynthesis; cob(II)yrinate a,c-diamide from sirohydrochlorin (anaerobic route): step 6/10. Its function is as follows. Catalyzes the methylation of C-1 in cobalt-precorrin-5B to form cobalt-precorrin-6A. This chain is Cobalt-precorrin-5B C(1)-methyltransferase, found in Cyanothece sp. (strain PCC 7425 / ATCC 29141).